The primary structure comprises 1012 residues: DNA polymerase catalytic subunit (1012 aa).

This sequence belongs to the DNA polymerase type-B family.

Its subcellular location is the host nucleus. It catalyses the reaction DNA(n) + a 2'-deoxyribonucleoside 5'-triphosphate = DNA(n+1) + diphosphate. The sequence is that of DNA polymerase catalytic subunit (U38) from Homo sapiens (Human).